We begin with the raw amino-acid sequence, 234 residues long: MAKLTKRMRVIREKVDATKQYDINEAIALLKELATAKFTESVDVAVNLGIDARKSDQNVRGATVLPHGTGRSVRVAVFTQGANAEAAKAAGAELVGMEDLAEQIKKGEMNFDVVIASPDAMRVVGQLGQVLGPRGLMPNPKVGTVTPNVAEAVKNAKAGQVRYRNDKNGIIHTTIGKVDFDADKLKENLEALLVALKKAKPTQAKGVYIKKVSISTTMGAGVAVDQAGLNASAN.

This sequence belongs to the universal ribosomal protein uL1 family. As to quaternary structure, part of the 50S ribosomal subunit.

Functionally, binds directly to 23S rRNA. The L1 stalk is quite mobile in the ribosome, and is involved in E site tRNA release. In terms of biological role, protein L1 is also a translational repressor protein, it controls the translation of the L11 operon by binding to its mRNA. The protein is Large ribosomal subunit protein uL1 of Klebsiella pneumoniae subsp. pneumoniae (strain ATCC 700721 / MGH 78578).